A 340-amino-acid polypeptide reads, in one-letter code: MSDIDPTVRADPLPEDHDRALRPQMLSEFVGQAEARANLKVFIASARQRGEAMDHTLFHGPPGLGKTTLAQIMARELGVGFRMTSGPVLAKAGDLAAILTNLEKRDVLFIDEIHRLNPAVEEVLYPALEDFELDLVIGEGPAARTVRIELQPFTLVGATTRMGLLTTPLRDRFGIPTRLQFYTEDELFIIVDRNARKLGAPADEGGAREIARRARGTPRIAGRLLRRVVDFAVVEGDGRVTRALADMALNRLGVDHLGLDGADRRYLRLIAENYGGGPVGIETMSAALSESRDALEEVIEPFLLQQGLIQRTPRGRMLAQKGWTHLGLDAPRAQTDLFEG.

Residues methionine 1 to tyrosine 182 are large ATPase domain (RuvB-L). ATP-binding positions include leucine 21, arginine 22, glycine 63, lysine 66, threonine 67, threonine 68, glutamate 129–phenylalanine 131, arginine 172, tyrosine 182, and arginine 219. Residue threonine 67 coordinates Mg(2+). A small ATPAse domain (RuvB-S) region spans residues threonine 183 to glycine 253. The segment at histidine 256–glycine 340 is head domain (RuvB-H). The DNA site is built by arginine 292, arginine 311, and arginine 316.

Belongs to the RuvB family. In terms of assembly, homohexamer. Forms an RuvA(8)-RuvB(12)-Holliday junction (HJ) complex. HJ DNA is sandwiched between 2 RuvA tetramers; dsDNA enters through RuvA and exits via RuvB. An RuvB hexamer assembles on each DNA strand where it exits the tetramer. Each RuvB hexamer is contacted by two RuvA subunits (via domain III) on 2 adjacent RuvB subunits; this complex drives branch migration. In the full resolvosome a probable DNA-RuvA(4)-RuvB(12)-RuvC(2) complex forms which resolves the HJ.

The protein localises to the cytoplasm. It catalyses the reaction ATP + H2O = ADP + phosphate + H(+). Functionally, the RuvA-RuvB-RuvC complex processes Holliday junction (HJ) DNA during genetic recombination and DNA repair, while the RuvA-RuvB complex plays an important role in the rescue of blocked DNA replication forks via replication fork reversal (RFR). RuvA specifically binds to HJ cruciform DNA, conferring on it an open structure. The RuvB hexamer acts as an ATP-dependent pump, pulling dsDNA into and through the RuvAB complex. RuvB forms 2 homohexamers on either side of HJ DNA bound by 1 or 2 RuvA tetramers; 4 subunits per hexamer contact DNA at a time. Coordinated motions by a converter formed by DNA-disengaged RuvB subunits stimulates ATP hydrolysis and nucleotide exchange. Immobilization of the converter enables RuvB to convert the ATP-contained energy into a lever motion, pulling 2 nucleotides of DNA out of the RuvA tetramer per ATP hydrolyzed, thus driving DNA branch migration. The RuvB motors rotate together with the DNA substrate, which together with the progressing nucleotide cycle form the mechanistic basis for DNA recombination by continuous HJ branch migration. Branch migration allows RuvC to scan DNA until it finds its consensus sequence, where it cleaves and resolves cruciform DNA. This Roseobacter denitrificans (strain ATCC 33942 / OCh 114) (Erythrobacter sp. (strain OCh 114)) protein is Holliday junction branch migration complex subunit RuvB.